Here is a 249-residue protein sequence, read N- to C-terminus: ATP synthase subunit a (249 aa).

5 helical membrane-spanning segments follow: residues 35-55 (ILLTSWFVIALILLAAFISSL), 92-112 (VPFIGTLFLFIFVSNWSGALV), 131-151 (INTTVALALLTSIAYFYAGIS), 187-209 (LFGNILADELVVGVLVLLVPLFI), and 221-241 (SAIQALIFATLAANYIGEALE).

The protein belongs to the ATPase A chain family. In terms of assembly, F-type ATPases have 2 components, CF(1) - the catalytic core - and CF(0) - the membrane proton channel. CF(1) has five subunits: alpha(3), beta(3), gamma(1), delta(1), epsilon(1). CF(0) has four main subunits: a, b, b' and c.

It localises to the cellular thylakoid membrane. Key component of the proton channel; it plays a direct role in the translocation of protons across the membrane. The chain is ATP synthase subunit a from Trichodesmium erythraeum (strain IMS101).